The primary structure comprises 425 residues: AP-3 complex subunit mu (425 aa).

Positions 175-423 (TNEFFIHVLE…TIIAQNVSFR (249 aa)) constitute an MHD domain.

This sequence belongs to the adaptor complexes medium subunit family.

The protein resides in the cytoplasm. The protein localises to the cytoskeleton. It is found in the microtubule organizing center. It localises to the spindle pole body. Its subcellular location is the membrane. The protein resides in the golgi apparatus. The protein localises to the cytoplasmic vesicle membrane. Functionally, part of the AP-3 complex, an adaptor-related complex which is not clathrin-associated. The complex is associated with the Golgi region as well as more peripheral structures. It facilitates the budding of vesicles from the Golgi membrane and may be directly involved in trafficking to the vacuole. The protein is AP-3 complex subunit mu (apm3) of Schizosaccharomyces pombe (strain 972 / ATCC 24843) (Fission yeast).